The sequence spans 244 residues: Gasdermin-like protein rcd-1-2 (244 aa).

Residues 1–22 form a disordered region; sequence MDNEEWFPLKQTHYPPPTIPSM.

This sequence belongs to the gasdermin family. Heterooligomer; the heterooligomer with rcd-1-1 forms a ring-shaped pore complex when inserted in the membrane.

It localises to the cytoplasm. The protein resides in the cell membrane. In terms of biological role, gasdermin-like protein involved in heterokaryon incompatibility, a process that ensures that during spontaneous vegetative cell fusion, only compatible cells from the same colony survive (non-self-recognition). In N.crassa, the rcd-1 locus exists as 2 incompatible alleles, rcd-1-1 (AC Q7SBA0) and rcd-1-2 (this entry). During the allorecognition process, forms a heterooligomer with rcd-1-1, thereby forming a functional gasdermin-like complex that binds to membranes and forms pores, triggering cell death. Binds negatively charged phospholipids, such as cardiolipin and phosphatidylserine. Also binds to phosphoinositides, preferentially to phosphatidylinositol-3-phosphate (PtdIns-3-P), PtdIns-5-P and PtdIns-3,5-P2. The polypeptide is Gasdermin-like protein rcd-1-2 (Neurospora crassa).